Here is a 318-residue protein sequence, read N- to C-terminus: MEITFLGTSSGVPTRSRNVSSIALRLPQRAEIWLFDCGEGTQHQLLRSDLKSSQIRRIFITHMHGDHIFGLMGLLASIGLAGSAQDIDIYGPPGLGDYLRACAKYSYTNLANRVRVHAISPGILYEDEEFTVSCQLLKHRIPAHGYRIAEKDRPGRFDVEKANALGIPPGPIYGKLKKGETVTLPDGSKIRGQSLCGETEIGRKIAYCTDTIFCEGSIELAQNADVLIHEATFAHQDAGLAFESVHSTSTMAAQVALAAQVKLLLMTHFSPRYLPGNSLDISNLLEEARAIFPNTKLAYDFLTYEVPRNRQEMALGVK.

Zn(2+) contacts are provided by H62, H64, D66, H67, H139, D210, and H268. Catalysis depends on D66, which acts as the Proton acceptor.

Belongs to the RNase Z family. Homodimer. It depends on Zn(2+) as a cofactor.

The enzyme catalyses Endonucleolytic cleavage of RNA, removing extra 3' nucleotides from tRNA precursor, generating 3' termini of tRNAs. A 3'-hydroxy group is left at the tRNA terminus and a 5'-phosphoryl group is left at the trailer molecule.. In terms of biological role, zinc phosphodiesterase, which displays some tRNA 3'-processing endonuclease activity. Probably involved in tRNA maturation, by removing a 3'-trailer from precursor tRNA. The chain is Ribonuclease Z from Microcystis aeruginosa (strain NIES-843 / IAM M-2473).